The sequence spans 302 residues: Cell division protein FtsQ (302 aa).

Over 1 to 43 the chain is Cytoplasmic; it reads MRPVDKKPVDRKIERETRYLRRDPAPSRWSYRYQRLMLTPAFR. Residues 44–64 traverse the membrane as a helical segment; the sequence is AGVRLGTPVIIIALAVAVVFG. The Periplasmic segment spans residues 65-302; sequence RADSRDWIMG…SMPGRSAGRG (238 aa). Positions 89–156 constitute a POTRA domain; the sequence is FMVGSFAITG…GVLQIVIEER (68 aa).

The protein belongs to the FtsQ/DivIB family. FtsQ subfamily.

It localises to the cell inner membrane. In terms of biological role, essential cell division protein. In Ketogulonicigenium vulgare (strain Y25), this protein is Cell division protein FtsQ.